We begin with the raw amino-acid sequence, 44 residues long: Peptide Hact-4 (44 aa).

Intrachain disulfides connect C8-C42, C15-C34, and C20-C43.

As to expression, expressed in tentacles.

It localises to the nematocyst. The protein localises to the secreted. In terms of biological role, peptide with unknown function. Does not exhibit antimicrobial activity against Escherichia coli and Staphylococcus aureus. Does not exhibit any effect on human ion channel TRPV1 in a Xenopus laevis oocytes assay. The sequence is that of Peptide Hact-4 from Heliofungia actiniformis (Mushroom coral).